Consider the following 147-residue polypeptide: Large ribosomal subunit protein bL9 (147 aa).

This sequence belongs to the bacterial ribosomal protein bL9 family.

In terms of biological role, binds to the 23S rRNA. This chain is Large ribosomal subunit protein bL9, found in Halalkalibacterium halodurans (strain ATCC BAA-125 / DSM 18197 / FERM 7344 / JCM 9153 / C-125) (Bacillus halodurans).